The primary structure comprises 346 residues: [LysW]-lysine/[LysW]-ornithine hydrolase (346 aa).

His-68 contributes to the Zn(2+) binding site. Asp-70 is an active-site residue. Asp-92 is a binding site for Zn(2+). Glu-122 serves as the catalytic Proton acceptor. Zn(2+) contacts are provided by Glu-123, Glu-146, and His-317.

The protein belongs to the peptidase M20A family. LysK subfamily. Requires Zn(2+) as cofactor. Co(2+) serves as cofactor.

Its subcellular location is the cytoplasm. It catalyses the reaction [amino-group carrier protein]-C-terminal-gamma-(L-lysyl)-L-glutamate + H2O = [amino-group carrier protein]-C-terminal-L-glutamate + L-lysine. It carries out the reaction [amino-group carrier protein]-C-terminal-gamma-(L-ornithyl)-L-glutamate + H2O = [amino-group carrier protein]-C-terminal-L-glutamate + L-ornithine. It functions in the pathway amino-acid biosynthesis; L-lysine biosynthesis via AAA pathway; L-lysine from L-alpha-aminoadipate (Thermus route): step 5/5. Its pathway is amino-acid biosynthesis; L-arginine biosynthesis. Functionally, catalyzes the release of L-lysine from [LysW]-gamma-L-lysine and the release of L-ornithine from [LysW]-L-ornithine. The protein is [LysW]-lysine/[LysW]-ornithine hydrolase of Saccharolobus islandicus (strain M.16.27) (Sulfolobus islandicus).